A 358-amino-acid chain; its full sequence is Vesicular integral-membrane protein VIP36 (358 aa).

The signal sequence occupies residues 1–46 (MAAEAWLWRWGWGWGQRCPGRPGLPGPGPSPTTFLHLLLLLGPVAA). Over 47–324 (DITDGNSEHL…FRNGPLTGWR (278 aa)) the chain is Lumenal. Residues 54–278 (EHLKREHSLI…DIISIKLFQL (225 aa)) form the L-type lectin-like domain. A carbohydrate-binding residues include Ser98 and Asp133. Asp164, Tyr166, and Asn168 together coordinate Ca(2+). 166-168 (YPN) is a binding site for a carbohydrate. Asn185 is a glycosylation site (N-linked (GlcNAc...) asparagine). His192 provides a ligand contact to a carbohydrate. Asp195 provides a ligand contact to Ca(2+). A disulfide bond links Cys204 and Cys241. An a carbohydrate-binding site is contributed by 262-264 (GDL). A helical membrane pass occupies residues 325-347 (VFLLLLCALLGVVVCAVVGAVVF). Over 348–358 (QKRQERNKRFY) the chain is Cytoplasmic.

The cofactor is Ca(2+).

It is found in the golgi apparatus membrane. Its function is as follows. Plays a role as an intracellular lectin in the early secretory pathway. Interacts with N-acetyl-D-galactosamine and high-mannose type glycans and may also bind to O-linked glycans. Involved in the transport and sorting of glycoproteins carrying high mannose-type glycans. The polypeptide is Vesicular integral-membrane protein VIP36 (Lman2) (Mus musculus (Mouse)).